We begin with the raw amino-acid sequence, 372 residues long: Chaperone protein DnaJ (372 aa).

The J domain maps to 5-69 (DYYEVLGLSK…QKKAQYDQFG (65 aa)). A CR-type zinc finger spans residues 129 to 211 (GAEKEISVKK…CGGTGRKVKT (83 aa)). Zn(2+) contacts are provided by C142, C145, C159, C162, C185, C188, C199, and C202. 4 CXXCXGXG motif repeats span residues 142-149 (CDTCDGSG), 159-166 (CSTCGGRG), 185-192 (CPDCGGTG), and 199-206 (CSDCGGTG).

This sequence belongs to the DnaJ family. Homodimer. It depends on Zn(2+) as a cofactor.

The protein localises to the cytoplasm. Functionally, participates actively in the response to hyperosmotic and heat shock by preventing the aggregation of stress-denatured proteins and by disaggregating proteins, also in an autonomous, DnaK-independent fashion. Unfolded proteins bind initially to DnaJ; upon interaction with the DnaJ-bound protein, DnaK hydrolyzes its bound ATP, resulting in the formation of a stable complex. GrpE releases ADP from DnaK; ATP binding to DnaK triggers the release of the substrate protein, thus completing the reaction cycle. Several rounds of ATP-dependent interactions between DnaJ, DnaK and GrpE are required for fully efficient folding. Also involved, together with DnaK and GrpE, in the DNA replication of plasmids through activation of initiation proteins. This is Chaperone protein DnaJ from Macrococcus caseolyticus (strain JCSC5402) (Macrococcoides caseolyticum).